The primary structure comprises 398 residues: NADH-quinone oxidoreductase subunit D (398 aa).

Belongs to the complex I 49 kDa subunit family. NDH-1 is composed of 14 different subunits. Subunits NuoB, C, D, E, F, and G constitute the peripheral sector of the complex.

It localises to the cell inner membrane. The enzyme catalyses a quinone + NADH + 5 H(+)(in) = a quinol + NAD(+) + 4 H(+)(out). In terms of biological role, NDH-1 shuttles electrons from NADH, via FMN and iron-sulfur (Fe-S) centers, to quinones in the respiratory chain. The immediate electron acceptor for the enzyme in this species is believed to be ubiquinone. Couples the redox reaction to proton translocation (for every two electrons transferred, four hydrogen ions are translocated across the cytoplasmic membrane), and thus conserves the redox energy in a proton gradient. This Caulobacter vibrioides (strain ATCC 19089 / CIP 103742 / CB 15) (Caulobacter crescentus) protein is NADH-quinone oxidoreductase subunit D.